The sequence spans 419 residues: CinA-like protein (419 aa).

It belongs to the CinA family.

This is CinA-like protein from Acaryochloris marina (strain MBIC 11017).